The chain runs to 301 residues: tRNA dimethylallyltransferase (301 aa).

12-19 (GPTAVGKT) is a binding site for ATP. 14–19 (TAVGKT) contacts substrate. The segment at 37 to 40 (DSQQ) is interaction with substrate tRNA.

Belongs to the IPP transferase family. Monomer. Requires Mg(2+) as cofactor.

The catalysed reaction is adenosine(37) in tRNA + dimethylallyl diphosphate = N(6)-dimethylallyladenosine(37) in tRNA + diphosphate. Catalyzes the transfer of a dimethylallyl group onto the adenine at position 37 in tRNAs that read codons beginning with uridine, leading to the formation of N6-(dimethylallyl)adenosine (i(6)A). This is tRNA dimethylallyltransferase from Streptococcus uberis (strain ATCC BAA-854 / 0140J).